A 652-amino-acid polypeptide reads, in one-letter code: Thioredoxin reductase 3 (652 aa).

Positions 1–12 (MEKPPSPPPPPR) are enriched in pro residues. The segment at 1–62 (MEKPPSPPPP…TSRPSSEARE (62 aa)) is disordered. Arg34 carries the asymmetric dimethylarginine; alternate modification. Position 34 is an omega-N-methylarginine; alternate (Arg34). Position 50 is a phosphoserine (Ser50). A Glutaredoxin domain is found at 65 to 165 (RRRLRDLIEG…KLLQDDSAHD (101 aa)). FAD is bound at residue 167 to 196 (DLIIIGGGSGGLSCAKEAANLGKKVMVLDF). Cys212 and Cys217 are joined by a disulfide. Lys388 is subject to N6-succinyllysine. His625 (proton acceptor) is an active-site residue. The segment at residues 650-651 (CU) is a cross-link (cysteinyl-selenocysteine (Cys-Sec)). Residue Sec651 is a non-standard amino acid, selenocysteine.

Belongs to the class-I pyridine nucleotide-disulfide oxidoreductase family. In terms of assembly, homodimer. The cofactor is FAD. As to expression, expressed preferentially in testis where it is found in spermatids and spermatocytes but not in sperm. In elongating spermatids, expressed at the site of mitochondrial sheath formation. Low levels in other tissues including heart, lung, liver, kidney, brain, muscle and prostate.

The protein localises to the cytoplasm. The protein resides in the nucleus. It localises to the microsome. It is found in the endoplasmic reticulum. The enzyme catalyses [thioredoxin]-dithiol + NADP(+) = [thioredoxin]-disulfide + NADPH + H(+). Its function is as follows. Displays thioredoxin reductase, glutaredoxin and glutathione reductase activities. Catalyzes disulfide bond isomerization. Promotes disulfide bond formation between GPX4 and various sperm proteins and may play a role in sperm maturation by promoting formation of sperm structural components. This Mus musculus (Mouse) protein is Thioredoxin reductase 3.